The primary structure comprises 143 residues: Nucleoside diphosphate kinase (143 aa).

The ATP site is built by lysine 11, phenylalanine 59, arginine 87, threonine 93, arginine 104, and asparagine 114. Catalysis depends on histidine 117, which acts as the Pros-phosphohistidine intermediate.

This sequence belongs to the NDK family. Homotetramer. It depends on Mg(2+) as a cofactor.

It is found in the cytoplasm. It catalyses the reaction a 2'-deoxyribonucleoside 5'-diphosphate + ATP = a 2'-deoxyribonucleoside 5'-triphosphate + ADP. The enzyme catalyses a ribonucleoside 5'-diphosphate + ATP = a ribonucleoside 5'-triphosphate + ADP. Functionally, major role in the synthesis of nucleoside triphosphates other than ATP. The ATP gamma phosphate is transferred to the NDP beta phosphate via a ping-pong mechanism, using a phosphorylated active-site intermediate. This chain is Nucleoside diphosphate kinase, found in Shewanella baltica (strain OS223).